A 461-amino-acid polypeptide reads, in one-letter code: Siroheme synthase (461 aa).

Residues 1 to 204 (MRYLPLFVYL…GNFRKANRVI (204 aa)) are precorrin-2 dehydrogenase /sirohydrochlorin ferrochelatase. NAD(+) is bound by residues 22–23 (IV) and 43–44 (KT). Residue S128 is modified to Phosphoserine. Positions 218-461 (GSVSLVGAGP…HNEISWFGNG (244 aa)) are uroporphyrinogen-III C-methyltransferase. An S-adenosyl-L-methionine-binding site is contributed by P227. Catalysis depends on D250, which acts as the Proton acceptor. The active-site Proton donor is the K272. Residues 303-305 (GGD), I308, M386, and G415 each bind S-adenosyl-L-methionine.

It in the N-terminal section; belongs to the precorrin-2 dehydrogenase / sirohydrochlorin ferrochelatase family. The protein in the C-terminal section; belongs to the precorrin methyltransferase family.

It carries out the reaction uroporphyrinogen III + 2 S-adenosyl-L-methionine = precorrin-2 + 2 S-adenosyl-L-homocysteine + H(+). The catalysed reaction is precorrin-2 + NAD(+) = sirohydrochlorin + NADH + 2 H(+). The enzyme catalyses siroheme + 2 H(+) = sirohydrochlorin + Fe(2+). Its pathway is cofactor biosynthesis; adenosylcobalamin biosynthesis; precorrin-2 from uroporphyrinogen III: step 1/1. The protein operates within cofactor biosynthesis; adenosylcobalamin biosynthesis; sirohydrochlorin from precorrin-2: step 1/1. It functions in the pathway porphyrin-containing compound metabolism; siroheme biosynthesis; precorrin-2 from uroporphyrinogen III: step 1/1. It participates in porphyrin-containing compound metabolism; siroheme biosynthesis; siroheme from sirohydrochlorin: step 1/1. Its pathway is porphyrin-containing compound metabolism; siroheme biosynthesis; sirohydrochlorin from precorrin-2: step 1/1. Multifunctional enzyme that catalyzes the SAM-dependent methylations of uroporphyrinogen III at position C-2 and C-7 to form precorrin-2 via precorrin-1. Then it catalyzes the NAD-dependent ring dehydrogenation of precorrin-2 to yield sirohydrochlorin. Finally, it catalyzes the ferrochelation of sirohydrochlorin to yield siroheme. The sequence is that of Siroheme synthase from Blochmanniella floridana.